Here is a 434-residue protein sequence, read N- to C-terminus: UDP-glucuronate 4-epimerase 2 (434 aa).

Helical transmembrane passes span 32–52 (SVAK…IFFY) and 91–111 (GVSV…SAAL). 93–124 (SVLVTGAAGFVGTHVSAALKRRGDGVLGLDNF) provides a ligand contact to NAD(+). The active-site Proton acceptor is Y243.

The protein belongs to the NAD(P)-dependent epimerase/dehydratase family. As to quaternary structure, homodimer. As to expression, in roots, leaves, siliques, flowers, pollen and stems.

Its subcellular location is the golgi apparatus. It localises to the golgi stack membrane. The catalysed reaction is UDP-alpha-D-glucuronate = UDP-alpha-D-galacturonate. Involved in the synthesis of the negatively charged monosaccharide that forms the backbone of pectic cell wall components. The chain is UDP-glucuronate 4-epimerase 2 (GAE2) from Arabidopsis thaliana (Mouse-ear cress).